A 236-amino-acid polypeptide reads, in one-letter code: Uridylate kinase (236 aa).

9–12 (KFSG) serves as a coordination point for ATP. The interval 17 to 22 (GNSGFG) is involved in allosteric activation by GTP. Residue glycine 51 coordinates UMP. The ATP site is built by glycine 52 and arginine 56. UMP is bound by residues aspartate 72 and 133 to 140 (TGNPFFTT). ATP contacts are provided by threonine 160, tyrosine 166, and aspartate 169.

The protein belongs to the UMP kinase family. Homohexamer.

Its subcellular location is the cytoplasm. It carries out the reaction UMP + ATP = UDP + ADP. It participates in pyrimidine metabolism; CTP biosynthesis via de novo pathway; UDP from UMP (UMPK route): step 1/1. With respect to regulation, allosterically activated by GTP. Inhibited by UTP. Its function is as follows. Catalyzes the reversible phosphorylation of UMP to UDP. This Helicobacter hepaticus (strain ATCC 51449 / 3B1) protein is Uridylate kinase.